A 561-amino-acid chain; its full sequence is Carbohydrate sulfotransferase 15 (561 aa).

Over 1 to 80 (MRHCINCCIQ…FLRFKKGKRC (80 aa)) the chain is Cytoplasmic. Residues 81 to 101 (SLVFGLIIMTLVMASYILSGA) traverse the membrane as a helical; Signal-anchor for type II membrane protein segment. Over 102 to 561 (HQELLISSPF…ADEAFAWKTT (460 aa)) the chain is Lumenal. Position 263–267 (263–267 (KCGTT)) interacts with 3'-phosphoadenylyl sulfate. The N-linked (GlcNAc...) asparagine glycan is linked to N364. 3'-phosphoadenylyl sulfate-binding residues include R392 and S400.

This sequence belongs to the sulfotransferase 1 family. In terms of assembly, homodimer; disulfide-linked (Potential). The relevance of homodimerization is however unsure. May interact with phosphorylated proteins in resting B-cells, including HCK. A divalent metal cation is required as a cofactor. The cofactor is glutathione. Post-translationally, glycosylated. As to expression, expressed in B-cell-enriched tissues but not in fetal or adult thymus. Expressed in fetal and adult spleen, lymph node, tonsil, bone marrow and peripheral leukocytes. Not expressed in T-cells. In pro-B, pre-B, and mature B-cell lines, it colocalizes with RAG1.

Its subcellular location is the golgi apparatus membrane. It catalyses the reaction dermatan 4'-sulfate + n 3'-phosphoadenylyl sulfate = dermatan 4',6'-bissulfate + n adenosine 3',5'-bisphosphate + n H(+). The enzyme catalyses chondroitin 4'-sulfate + n 3'-phosphoadenylyl sulfate = chondroitin 4',6'-bissulfate + n adenosine 3',5'-bisphosphate + n H(+). Its activity is regulated as follows. Inhibited by phenyl beta-GalNAc(4,6-SO(4)). Functionally, sulfotransferase that transfers sulfate from 3'-phosphoadenosine 5'-phosphosulfate (PAPS) to the C-6 hydroxyl group of the GalNAc 4-sulfate residue of chondroitin sulfate A and forms chondroitin sulfate E containing GlcA-GalNAc(4,6-SO(4)) repeating units. It also transfers sulfate to a unique non-reducing terminal sequence, GalNAc(4SO4)-GlcA(2SO4)-GalNAc(6SO4), to yield a highly sulfated structure similar to the structure found in thrombomodulin chondroitin sulfate. May also act as a B-cell receptor involved in BCR ligation-mediated early activation that mediate regulatory signals key to B-cell development and/or regulation of B-cell-specific RAG expression; however such results are unclear in vivo. In Homo sapiens (Human), this protein is Carbohydrate sulfotransferase 15 (CHST15).